The primary structure comprises 329 residues: Malate dehydrogenase (329 aa).

12–18 (GAAGQIG) provides a ligand contact to NAD(+). Substrate contacts are provided by R93 and R99. Residues N106, Q113, and 130-132 (TGN) contribute to the NAD(+) site. 2 residues coordinate substrate: N132 and R163. The active-site Proton acceptor is the H188.

It belongs to the LDH/MDH superfamily. MDH type 2 family.

It catalyses the reaction (S)-malate + NAD(+) = oxaloacetate + NADH + H(+). Catalyzes the reversible oxidation of malate to oxaloacetate. The protein is Malate dehydrogenase of Mycobacterium bovis (strain ATCC BAA-935 / AF2122/97).